A 78-amino-acid chain; its full sequence is UPF0349 protein ABC2936 (78 aa).

It belongs to the UPF0349 family.

In Shouchella clausii (strain KSM-K16) (Alkalihalobacillus clausii), this protein is UPF0349 protein ABC2936.